We begin with the raw amino-acid sequence, 184 residues long: Ribosome-recycling factor (184 aa).

Residues 141 to 161 (KKNDKAISEDDQRKGQDDVQK) form a disordered region.

This sequence belongs to the RRF family.

It is found in the cytoplasm. Functionally, responsible for the release of ribosomes from messenger RNA at the termination of protein biosynthesis. May increase the efficiency of translation by recycling ribosomes from one round of translation to another. The polypeptide is Ribosome-recycling factor (Solidesulfovibrio magneticus (strain ATCC 700980 / DSM 13731 / RS-1) (Desulfovibrio magneticus)).